A 479-amino-acid polypeptide reads, in one-letter code: MFRAALWPPVLLLLQLLLLACAPGGEGAHDQDEIRFLPGLAKQPSFRQYSGYLKGSGSKRLHYWFVESQKDPKSSPVVLWLNGGPGCSSLDGLLTEHGPFLIQPDGVTLEYNPYSWNLIANVLYLESPAGVGFSYSDDKSYATNDTEVAQSNFEALKDFFCLFPEYKGNELFLTGESYAGIYIPTLAVLVMQDPSMNLQGLAVGNGLSSYEQNDNSLVYFAYYHGLLGNRLWSSLQTHCCSQNQCNFHDNKEPECVANLQEVSHIVASSGLNIYNLYAPCAGGVPSHVRHEKDTVVVQDLGNIFTRLPLKRVWHQTLLRSGEKVHLDPPCTNTTAASNYLNDPHVRKALHIPEQLPRWDLCNFLVNIQYRRLYQSMCSQYLKLLSAQKYRILLYNGDVDMACNFMGDEWFVDSLNQKMEVQRRPWLVDYGESGEQIAGFVKEFSHIAFLTIKGAGHMVPTDKPQAALTMFSRFLNRQPY.

Positions 1–27 (MFRAALWPPVLLLLQLLLLACAPGGEG) are cleaved as a signal peptide. 4 disulfides stabilise this stretch: cysteine 87–cysteine 361, cysteine 239–cysteine 255, cysteine 240–cysteine 245, and cysteine 280–cysteine 330. Residue asparagine 144 is glycosylated (N-linked (GlcNAc...) asparagine). The active site involves serine 177. An N-linked (GlcNAc...) asparagine glycan is attached at asparagine 332. Residues aspartate 399 and histidine 456 contribute to the active site.

It belongs to the peptidase S10 family. Heterodimer of a 32 kDa chain and a 20 kDa chain; disulfide-linked.

The protein localises to the lysosome. The enzyme catalyses Release of a C-terminal amino acid with broad specificity.. Its function is as follows. Protective protein appears to be essential for both the activity of beta-galactosidase and neuraminidase, it associates with these enzymes and exerts a protective function necessary for their stability and activity. This protein is also a carboxypeptidase and can deamidate tachykinins. This chain is Lysosomal protective protein (CTSA), found in Bos taurus (Bovine).